The sequence spans 440 residues: Thymidine phosphorylase (440 aa).

Belongs to the thymidine/pyrimidine-nucleoside phosphorylase family. In terms of assembly, homodimer.

It catalyses the reaction thymidine + phosphate = 2-deoxy-alpha-D-ribose 1-phosphate + thymine. Its pathway is pyrimidine metabolism; dTMP biosynthesis via salvage pathway; dTMP from thymine: step 1/2. In terms of biological role, the enzymes which catalyze the reversible phosphorolysis of pyrimidine nucleosides are involved in the degradation of these compounds and in their utilization as carbon and energy sources, or in the rescue of pyrimidine bases for nucleotide synthesis. This chain is Thymidine phosphorylase, found in Escherichia coli (strain K12 / DH10B).